Reading from the N-terminus, the 733-residue chain is Tyrosine-protein kinase ptk (733 aa).

Helical transmembrane passes span 19-39 and 438-458; these read LFFS…LSLI and LQIL…LALL. 542–550 lines the ATP pocket; the sequence is GPAPEVGKS.

This sequence belongs to the etk/wzc family. The cofactor is Mg(2+). It depends on Mn(2+) as a cofactor. Autophosphorylated on several Tyr residues. Dephosphorylated by ptp.

Its subcellular location is the cell inner membrane. It catalyses the reaction L-tyrosyl-[protein] + ATP = O-phospho-L-tyrosyl-[protein] + ADP + H(+). Its pathway is glycan metabolism; exopolysaccharide biosynthesis. In terms of biological role, may be involved in the production and the transport of exopolysaccharides. The chain is Tyrosine-protein kinase ptk (ptk) from Acinetobacter johnsonii.